The primary structure comprises 432 residues: Histidinol dehydrogenase (432 aa).

Residues Tyr-133, Gln-194, and Asn-217 each contribute to the NAD(+) site. Residues Ser-240, Gln-262, and His-265 each contribute to the substrate site. Zn(2+) is bound by residues Gln-262 and His-265. Catalysis depends on proton acceptor residues Glu-330 and His-331. Substrate-binding residues include His-331, Asp-364, Glu-418, and His-423. Position 364 (Asp-364) interacts with Zn(2+). His-423 contributes to the Zn(2+) binding site.

This sequence belongs to the histidinol dehydrogenase family. It depends on Zn(2+) as a cofactor.

It catalyses the reaction L-histidinol + 2 NAD(+) + H2O = L-histidine + 2 NADH + 3 H(+). It functions in the pathway amino-acid biosynthesis; L-histidine biosynthesis; L-histidine from 5-phospho-alpha-D-ribose 1-diphosphate: step 9/9. Its function is as follows. Catalyzes the sequential NAD-dependent oxidations of L-histidinol to L-histidinaldehyde and then to L-histidine. The sequence is that of Histidinol dehydrogenase from Nitrosomonas europaea (strain ATCC 19718 / CIP 103999 / KCTC 2705 / NBRC 14298).